Consider the following 434-residue polypeptide: MPLKSLKNRLNQHFELSPRYGSVKKIMPNIVYADGFNPSVGDVVKIEKSDGTECVGMVVVAEKEQFGFTPFNFIEGARAGDKVLFLKEGLNFPVGRNLLGRVLNPLGQVIDNKGVLDYERLAPVITTPIAPLKRGLIDEVFSVGVKSIDGLLTCGKGQKLGIFAGSGVGKSTLMGMITRGCLAPIKVIALIGERGREIPEFIEKNLKGDLSSCVLVVATSDDSPLMRKYGAFCAMSVAEYFKNQGLDVLFIMDSVTRFAMAQREIGLALGEPPTSKGYPPSALSLLPQLMERAGKEENKGSITAFFSVLVEGDDLSDPIADQARSILDGHIVLSRELTDYGIYPPINILNSASRVAKDIISESQNLCARKFRRLYALLKENEMLIRIGSYQMGNDKELDEAIKKKALMEQFLVQDENALQPFEQSFQQLEEILR.

164–171 contacts ATP; it reads AGSGVGKS.

This sequence belongs to the ATPase alpha/beta chains family.

It is found in the cytoplasm. The enzyme catalyses ATP + H2O + 4 H(+)(in) = ADP + phosphate + 5 H(+)(out). Functionally, probable catalytic subunit of a protein translocase for flagellum-specific export, or a proton translocase involved in local circuits at the flagellum. This is Flagellum-specific ATP synthase (fliI) from Helicobacter pylori (strain J99 / ATCC 700824) (Campylobacter pylori J99).